A 140-amino-acid chain; its full sequence is Putative 6-pyruvoyl tetrahydrobiopterin synthase (140 aa).

Zn(2+) is bound at residue H19. C38 (proton acceptor) is an active-site residue. Residues H44 and H46 each coordinate Zn(2+). Catalysis depends on charge relay system residues H84 and E129.

The protein belongs to the PTPS family. Homohexamer formed of two homotrimers in a head to head fashion. Requires Zn(2+) as cofactor.

It catalyses the reaction 7,8-dihydroneopterin 3'-triphosphate = 6-pyruvoyl-5,6,7,8-tetrahydropterin + triphosphate + H(+). It functions in the pathway cofactor biosynthesis; tetrahydrobiopterin biosynthesis; tetrahydrobiopterin from 7,8-dihydroneopterin triphosphate: step 1/3. Its function is as follows. Involved in the biosynthesis of tetrahydrobiopterin, an essential cofactor of aromatic amino acid hydroxylases. Catalyzes the transformation of 7,8-dihydroneopterin triphosphate into 6-pyruvoyl tetrahydropterin. The sequence is that of Putative 6-pyruvoyl tetrahydrobiopterin synthase (ptps-1) from Caenorhabditis elegans.